Reading from the N-terminus, the 442-residue chain is D-inositol 3-phosphate glycosyltransferase (442 aa).

1D-myo-inositol 3-phosphate is bound at residue His26. Residues Gln32–Pro33 and Gly40 contribute to the UDP-N-acetyl-alpha-D-glucosamine site. Residues Asp37–Asn42, Lys95, Tyr128, Thr152, and Arg172 contribute to the 1D-myo-inositol 3-phosphate site. Residues Arg246, Lys251, and Gln304 each contribute to the UDP-N-acetyl-alpha-D-glucosamine site. 3 residues coordinate Mg(2+): Tyr313, Arg314, and Ala316. UDP-N-acetyl-alpha-D-glucosamine contacts are provided by Glu326 and Glu334. Thr340 is a binding site for Mg(2+).

This sequence belongs to the glycosyltransferase group 1 family. MshA subfamily. In terms of assembly, homodimer.

It carries out the reaction 1D-myo-inositol 3-phosphate + UDP-N-acetyl-alpha-D-glucosamine = 1D-myo-inositol 2-acetamido-2-deoxy-alpha-D-glucopyranoside 3-phosphate + UDP + H(+). Its function is as follows. Catalyzes the transfer of a N-acetyl-glucosamine moiety to 1D-myo-inositol 3-phosphate to produce 1D-myo-inositol 2-acetamido-2-deoxy-glucopyranoside 3-phosphate in the mycothiol biosynthesis pathway. This is D-inositol 3-phosphate glycosyltransferase from Mycolicibacterium gilvum (strain PYR-GCK) (Mycobacterium gilvum (strain PYR-GCK)).